The sequence spans 476 residues: Proline--tRNA ligase (476 aa).

It belongs to the class-II aminoacyl-tRNA synthetase family. ProS type 3 subfamily. Homodimer.

The protein localises to the cytoplasm. The catalysed reaction is tRNA(Pro) + L-proline + ATP = L-prolyl-tRNA(Pro) + AMP + diphosphate. Its function is as follows. Catalyzes the attachment of proline to tRNA(Pro) in a two-step reaction: proline is first activated by ATP to form Pro-AMP and then transferred to the acceptor end of tRNA(Pro). In Cenarchaeum symbiosum (strain A), this protein is Proline--tRNA ligase.